The primary structure comprises 451 residues: DNA-directed RNA polymerase subunit Rpo1C (451 aa).

The tract at residues 1 to 68 is unknown; that stretch reads MQDIIGKIED…DDDELLDAVE (68 aa). The segment at 69–451 is DNA-directed RNA polymerase subunit Rpo1C; the sequence is DDYQRILKVQ…SVSVVMKERK (383 aa).

It belongs to the RNA polymerase beta' chain family. As to quaternary structure, part of the RNA polymerase complex.

It localises to the cytoplasm. The catalysed reaction is RNA(n) + a ribonucleoside 5'-triphosphate = RNA(n+1) + diphosphate. In terms of biological role, DNA-dependent RNA polymerase (RNAP) catalyzes the transcription of DNA into RNA using the four ribonucleoside triphosphates as substrates. Forms part of the jaw domain. This Methanothermobacter thermautotrophicus (strain ATCC 29096 / DSM 1053 / JCM 10044 / NBRC 100330 / Delta H) (Methanobacterium thermoautotrophicum) protein is DNA-directed RNA polymerase subunit Rpo1C.